The following is a 1314-amino-acid chain: Phosphoribosylformylglycinamidine synthase (1314 aa).

Residues 307–318 (GAATGAGGEIRD) and A674 each bind ATP. The Mg(2+) site is built by D675, E714, N718, and D880. An ATP-binding site is contributed by S882. The 252-residue stretch at 1063 to 1314 (IAILREQGVN…LFAGARKALG (252 aa)) folds into the Glutamine amidotransferase type-1 domain. C1156 serves as the catalytic Nucleophile. Active-site residues include H1279 and E1281.

The protein in the N-terminal section; belongs to the FGAMS family. In terms of assembly, monomer.

The protein localises to the cytoplasm. It catalyses the reaction N(2)-formyl-N(1)-(5-phospho-beta-D-ribosyl)glycinamide + L-glutamine + ATP + H2O = 2-formamido-N(1)-(5-O-phospho-beta-D-ribosyl)acetamidine + L-glutamate + ADP + phosphate + H(+). Its pathway is purine metabolism; IMP biosynthesis via de novo pathway; 5-amino-1-(5-phospho-D-ribosyl)imidazole from N(2)-formyl-N(1)-(5-phospho-D-ribosyl)glycinamide: step 1/2. Its function is as follows. Phosphoribosylformylglycinamidine synthase involved in the purines biosynthetic pathway. Catalyzes the ATP-dependent conversion of formylglycinamide ribonucleotide (FGAR) and glutamine to yield formylglycinamidine ribonucleotide (FGAM) and glutamate. In Neisseria gonorrhoeae (strain ATCC 700825 / FA 1090), this protein is Phosphoribosylformylglycinamidine synthase.